The primary structure comprises 1452 residues: Receptor-type tyrosine-protein phosphatase mu (1452 aa).

An N-terminal signal peptide occupies residues 1–20; the sequence is MRTLGTCLVTLAGLLLTAAG. Over 21-742 the chain is Extracellular; sequence ETFSGGCLFD…PEKQTDHTVK (722 aa). In terms of domain architecture, MAM spans 22 to 184; sequence TFSGGCLFDE…VKVLGHPCTR (163 aa). C27 and C36 form a disulfide bridge. 4 N-linked (GlcNAc...) asparagine glycosylation sites follow: N72, N92, N131, and N249. Disulfide bonds link C96–C182 and C206–C260. Residues 186–277 form the Ig-like C2-type domain; it reads PHFLRIQNVE…VGISNYAELV (92 aa). 4 Fibronectin type-III domains span residues 284–379, 382–480, 481–587, and 589–671; these read PIAP…CADP, GPRK…TDED, LPGA…SAPS, and PAYE…DSLQ. Residues N406, N414, N454, N534, N544, N598, N651, and N681 are each glycosylated (N-linked (GlcNAc...) asparagine). Residues 743 to 764 form a helical membrane-spanning segment; the sequence is IAGVIAGILLFVIIFLGVVLVM. At 765 to 1452 the chain is on the cytoplasmic side; the sequence is KKRKLAKKRK…EVALEYLNSG (688 aa). S821 carries the post-translational modification Phosphoserine. Tyrosine-protein phosphatase domains are found at residues 900–1154 and 1186–1448; these read FKEE…ILEA and IKEE…ALEY. Substrate is bound by residues D1063, 1095 to 1101, and Q1139; that span reads CSAGAGR. C1095 serves as the catalytic Phosphocysteine intermediate. C1389 (phosphocysteine intermediate) is an active-site residue.

It belongs to the protein-tyrosine phosphatase family. Receptor class 2B subfamily. Homodimer. Most abundant in lung, less in brain and heart.

The protein localises to the cell membrane. It carries out the reaction O-phospho-L-tyrosyl-[protein] + H2O = L-tyrosyl-[protein] + phosphate. In terms of biological role, receptor protein-tyrosine phosphatase that mediates homotypic cell-cell interactions and plays a role in adipogenic differentiation via modulation of p120 catenin/CTNND1 phosphorylation. Promotes CTNND1 dephosphorylation and prevents its cytoplasmic localization where it inhibits SLC2A4 membrane trafficking. In turn, SLC2A4 is directed to the plasma membrane and performs its glucose transporter function. This Mus musculus (Mouse) protein is Receptor-type tyrosine-protein phosphatase mu (Ptprm).